The primary structure comprises 427 residues: Peptidase B (427 aa).

Residues K195 and D200 each coordinate Mn(2+). Residue K207 is part of the active site. Mn(2+) is bound by residues D218, D277, and E279. Residue R281 is part of the active site.

This sequence belongs to the peptidase M17 family. In terms of assembly, homohexamer. It depends on Mn(2+) as a cofactor.

The protein localises to the cytoplasm. The catalysed reaction is Release of an N-terminal amino acid, Xaa, from a peptide or arylamide. Xaa is preferably Glu or Asp but may be other amino acids, including Leu, Met, His, Cys and Gln.. Its function is as follows. Probably plays an important role in intracellular peptide degradation. This chain is Peptidase B, found in Shigella flexneri serotype 5b (strain 8401).